A 500-amino-acid polypeptide reads, in one-letter code: ATP synthase subunit alpha, sodium ion specific (500 aa).

169–176 contacts ATP; sequence GDRQTGKT.

Belongs to the ATPase alpha/beta chains family. In terms of assembly, F-type ATPases have 2 components, CF(1) - the catalytic core - and CF(0) - the membrane proton channel. CF(1) has five subunits: alpha(3), beta(3), gamma(1), delta(1), epsilon(1). CF(0) has three main subunits: a, b and c.

It is found in the cell membrane. It carries out the reaction 4 Na(+)(in) + ATP + H2O = 4 Na(+)(out) + ADP + phosphate + H(+). Functionally, produces ATP from ADP in the presence of a sodium ion gradient across the membrane. The alpha chain is a regulatory subunit. This chain is ATP synthase subunit alpha, sodium ion specific, found in Propionigenium modestum.